Consider the following 598-residue polypeptide: UvrABC system protein C (598 aa).

Positions 13-92 (SSPGVYLMKD…IKKYQPRYNV (80 aa)) constitute a GIY-YIG domain. The region spanning 206–241 (DTTIANLEEAIKKASQEHKFEHAAALYRTLTLIRQT) is the UVR domain.

This sequence belongs to the UvrC family. In terms of assembly, interacts with UvrB in an incision complex.

It is found in the cytoplasm. Functionally, the UvrABC repair system catalyzes the recognition and processing of DNA lesions. UvrC both incises the 5' and 3' sides of the lesion. The N-terminal half is responsible for the 3' incision and the C-terminal half is responsible for the 5' incision. The chain is UvrABC system protein C from Chlamydia muridarum (strain MoPn / Nigg).